Reading from the N-terminus, the 101-residue chain is NAD(P)H-quinone oxidoreductase subunit 4L, chloroplastic (101 aa).

The next 3 helical transmembrane spans lie at 2–22 (ILEHVLVLSAYLFLIGLYGLI), 32–52 (MCLELILNAVNMNFVTFSDFF), and 61–81 (IFCIFVIAIAAAEAAIGLAIV).

It belongs to the complex I subunit 4L family. As to quaternary structure, NDH is composed of at least 16 different subunits, 5 of which are encoded in the nucleus.

It is found in the plastid. It localises to the chloroplast thylakoid membrane. It catalyses the reaction a plastoquinone + NADH + (n+1) H(+)(in) = a plastoquinol + NAD(+) + n H(+)(out). It carries out the reaction a plastoquinone + NADPH + (n+1) H(+)(in) = a plastoquinol + NADP(+) + n H(+)(out). Its function is as follows. NDH shuttles electrons from NAD(P)H:plastoquinone, via FMN and iron-sulfur (Fe-S) centers, to quinones in the photosynthetic chain and possibly in a chloroplast respiratory chain. The immediate electron acceptor for the enzyme in this species is believed to be plastoquinone. Couples the redox reaction to proton translocation, and thus conserves the redox energy in a proton gradient. In Lepidium virginicum (Virginia pepperweed), this protein is NAD(P)H-quinone oxidoreductase subunit 4L, chloroplastic.